Here is a 156-residue protein sequence, read N- to C-terminus: Small ribosomal subunit protein uS7 (156 aa).

Belongs to the universal ribosomal protein uS7 family. As to quaternary structure, part of the 30S ribosomal subunit. Contacts proteins S9 and S11.

In terms of biological role, one of the primary rRNA binding proteins, it binds directly to 16S rRNA where it nucleates assembly of the head domain of the 30S subunit. Is located at the subunit interface close to the decoding center, probably blocks exit of the E-site tRNA. This Mycobacterium bovis (strain ATCC BAA-935 / AF2122/97) protein is Small ribosomal subunit protein uS7.